The following is a 973-amino-acid chain: FHF complex subunit HOOK-interacting protein 1B (973 aa).

Disordered regions lie at residues 466–493 (SSPSRPEHASWARGPGSPSVDSSSVVTV), 510–547 (SLGGSESPAPAPRSPGLATSPASSPGRRPSPVEEPGEL), and 573–647 (SAPY…EGAK). S467 carries the post-translational modification Phosphoserine. Low complexity predominate over residues 482–493 (SPSVDSSSVVTV). 4 positions are modified to phosphoserine: S510, S523, S529, and S533. Composition is skewed to low complexity over residues 529–538 (SPASSPGRRP) and 622–639 (GARESLGHLPPPQLNGLP). 2 positions are modified to phosphoserine: S859 and S898.

The protein belongs to the FHIP family. In terms of assembly, component of the FTS/Hook/FHIP complex (FHF complex), composed of AKTIP/FTS, FHIP1B, and one or more members of the Hook family of proteins HOOK1, HOOK2, and HOOK3. The FHF complex associates with the homotypic vesicular sorting complex (the HOPS complex).

Functionally, component of the FTS/Hook/FHIP complex (FHF complex). The FHF complex may function to promote vesicle trafficking and/or fusion via the homotypic vesicular protein sorting complex (the HOPS complex). FHF complex promotes the distribution of AP-4 complex to the perinuclear area of the cell. In Bos taurus (Bovine), this protein is FHF complex subunit HOOK-interacting protein 1B (FHIP1B).